The primary structure comprises 519 residues: uncharacterized protein (519 aa).

4 helical membrane-spanning segments follow: residues 141–161 (GSSL…ANVF), 202–222 (LGET…WALA), 385–405 (FVVR…PFVG), and 433–453 (TVVP…AELV).

Its subcellular location is the cell membrane. This is an uncharacterized protein from Sinorhizobium fredii (strain NBRC 101917 / NGR234).